The primary structure comprises 478 residues: UDP-N-acetylmuramate--L-alanine ligase (478 aa).

Residue 112–118 coordinates ATP; that stretch reads GTHGKTT.

It belongs to the MurCDEF family.

The protein resides in the cytoplasm. It catalyses the reaction UDP-N-acetyl-alpha-D-muramate + L-alanine + ATP = UDP-N-acetyl-alpha-D-muramoyl-L-alanine + ADP + phosphate + H(+). The protein operates within cell wall biogenesis; peptidoglycan biosynthesis. Its function is as follows. Cell wall formation. The sequence is that of UDP-N-acetylmuramate--L-alanine ligase from Polynucleobacter asymbioticus (strain DSM 18221 / CIP 109841 / QLW-P1DMWA-1) (Polynucleobacter necessarius subsp. asymbioticus).